Consider the following 248-residue polypeptide: uncharacterized protein (248 aa).

This is an uncharacterized protein from Sinorhizobium fredii (strain NBRC 101917 / NGR234).